Here is a 521-residue protein sequence, read N- to C-terminus: AAA ATPase forming ring-shaped complexes (521 aa).

Positions 4-44 (TEDLAALNDRLMAKNHALAEALNRAGKELTKAKSRLAQLAQ) form a coiled coil. Residue 235–240 (GNGKTM) participates in ATP binding.

Belongs to the AAA ATPase family. As to quaternary structure, homohexamer. Assembles into a hexameric ring structure.

The protein is AAA ATPase forming ring-shaped complexes of Bifidobacterium longum subsp. infantis (strain ATCC 15697 / DSM 20088 / JCM 1222 / NCTC 11817 / S12).